We begin with the raw amino-acid sequence, 100 residues long: Osteocalcin (100 aa).

Residues 1-23 form the signal peptide; sequence MRALTLLALLALATLCITGQAGA. A propeptide spanning residues 24 to 51 is cleaved from the precursor; the sequence is KPSGAESSKGAAFVSKQEGSEVVKRPRR. The Gla domain maps to 52–98; that stretch reads YLYQWLGAPAPYPDPLEPKREVCELNPDCDELADHIGFQEAYRRFYG. At proline 60 the chain carries 4-hydroxyproline. Ca(2+) is bound by residues glutamate 68, glutamate 72, glutamate 75, and aspartate 81. Residues glutamate 68, glutamate 72, and glutamate 75 each carry the 4-carboxyglutamate modification. Cysteine 74 and cysteine 80 are oxidised to a cystine.

The protein belongs to the osteocalcin/matrix Gla protein family. Gamma-carboxyglutamate residues are formed by vitamin K dependent carboxylation by GGCX. These residues are essential for the binding of calcium. Decarboxylation promotes the hormone activity.

It is found in the secreted. Functionally, the carboxylated form is one of the main organic components of the bone matrix, which constitutes 1-2% of the total bone protein: it acts as a negative regulator of bone formation and is required to limit bone formation without impairing bone resorption or mineralization. The carboxylated form binds strongly to apatite and calcium. The uncarboxylated form acts as a hormone secreted by osteoblasts, which regulates different cellular processes, such as energy metabolism, male fertility and brain development. Regulates of energy metabolism by acting as a hormone favoring pancreatic beta-cell proliferation, insulin secretion and sensitivity and energy expenditure. Uncarboxylated osteocalcin hormone also promotes testosterone production in the testes: acts as a ligand for G protein-coupled receptor GPRC6A at the surface of Leydig cells, initiating a signaling response that promotes the expression of enzymes required for testosterone synthesis in a CREB-dependent manner. Also acts as a regulator of brain development: osteocalcin hormone crosses the blood-brain barrier and acts as a ligand for GPR158 on neurons, initiating a signaling response that prevents neuronal apoptosis in the hippocampus, favors the synthesis of all monoamine neurotransmitters and inhibits that of gamma-aminobutyric acid (GABA). Osteocalcin also crosses the placenta during pregnancy and maternal osteocalcin is required for fetal brain development. This Macaca mulatta (Rhesus macaque) protein is Osteocalcin (BGLAP).